A 430-amino-acid chain; its full sequence is Tol-Pal system protein TolB (430 aa).

Positions 1-21 are cleaved as a signal peptide; the sequence is MRRFVTLLIALLCLSATAVQA.

The protein belongs to the TolB family. In terms of assembly, the Tol-Pal system is composed of five core proteins: the inner membrane proteins TolA, TolQ and TolR, the periplasmic protein TolB and the outer membrane protein Pal. They form a network linking the inner and outer membranes and the peptidoglycan layer.

The protein localises to the periplasm. Functionally, part of the Tol-Pal system, which plays a role in outer membrane invagination during cell division and is important for maintaining outer membrane integrity. The sequence is that of Tol-Pal system protein TolB from Syntrophotalea carbinolica (strain DSM 2380 / NBRC 103641 / GraBd1) (Pelobacter carbinolicus).